The following is a 442-amino-acid chain: O-acetyl-L-homoserine sulfhydrylase (442 aa).

Positions 1 to 32 (MVGPSGESMPRNFKPETIALHGGQEPDPTTTS) are disordered. Position 216 is an N6-(pyridoxal phosphate)lysine (Lys216).

Belongs to the trans-sulfuration enzymes family. Pyridoxal 5'-phosphate is required as a cofactor.

The enzyme catalyses O-acetyl-L-homoserine + hydrogen sulfide = L-homocysteine + acetate. Its pathway is amino-acid biosynthesis; L-methionine biosynthesis via de novo pathway; L-homocysteine from O-acetyl-L-homoserine: step 1/1. With respect to regulation, feedback inhibited at very high concentrations of methionine or S-adenosylmethionine. Functionally, catalyzes the conversion of O-acetyl-L-homoserine (OAH) into homocysteine in the methionine biosynthesis pathway. Can also use O-succinyl-homoserine (OSH), although at low efficiency. The polypeptide is O-acetyl-L-homoserine sulfhydrylase (Leptospira meyeri).